The primary structure comprises 462 residues: Tryptophan dimethylallyltransferase ifgA (462 aa).

L-tryptophan is bound by residues 83–84 and E92; that span reads IL. Substrate-binding residues include R103, K189, and Y191. 2 residues coordinate L-tryptophan: Y193 and R246. Residues R259, K261, Y263, Q345, and Y347 each coordinate substrate.

This sequence belongs to the tryptophan dimethylallyltransferase family. As to quaternary structure, homodimer.

The enzyme catalyses L-tryptophan + dimethylallyl diphosphate = 4-(3-methylbut-2-enyl)-L-tryptophan + diphosphate. It functions in the pathway alkaloid biosynthesis; ergot alkaloid biosynthesis. In terms of biological role, tryptophan dimethylallyltransferase; part of the gene cluster that mediates the biosynthesis of isofumigaclavines, fungal ergot alkaloids. The tryptophan dimethylallyltransferase ifgA catalyzes the first step of ergot alkaloid biosynthesis by condensing dimethylallyl diphosphate (DMAP) and tryptophan to form 4-dimethylallyl-L-tryptophan. The second step is catalyzed by the methyltransferase ifgB that methylates 4-dimethylallyl-L-tryptophan in the presence of S-adenosyl-L-methionine, resulting in the formation of N-methyl-dimethylallyl-L-tryptophan. The catalase ifgD and the FAD-dependent oxidoreductase ifgC then transform N-methyl-dimethylallyl-L-tryptophan to chanoclavine-I which is further oxidized by ifgE in the presence of NAD(+), resulting in the formation of chanoclavine-I aldehyde. The chanoclavine-I aldehyde reductases ifgG and/or fgaOx3 reduce chanoclavine-I aldehyde to dihydrochanoclavine-I aldehyde that spontaneously dehydrates to form 6,8-dimethyl-6,7-didehydroergoline. The festuclavine dehydrogenases ifgF1 and/or ifgF2 then catalyze the reduction of 6,8-dimethyl-6,7-didehydroergoline to form festuclavine. Hydrolysis of festuclavine by a yet undetermined cytochrome P450 monooxygenase (called ifgH) then leads to the formation of isofumigaclavine B which is in turn acetylated by ifgI to isofumigaclavine A. Penicillium roqueforti has interestingly at least two sets of genes for the consumption of chanoclavine-I aldehyde on three different loci, the OYEs ifgG/fgaOx3 and the festuclavine synthase homologs ifgF1/ifgF2. The reason for the duplication of these genes is unclear, probably to ensure the conversion of chanoclavine-I aldehyde by differential gene expression under various environmental conditions. This chain is Tryptophan dimethylallyltransferase ifgA, found in Penicillium roqueforti (strain FM164).